The primary structure comprises 576 residues: Urease subunit alpha (576 aa).

The Urease domain occupies 132 to 576 (GGVDTHIHFI…LPMAQRYFLF (445 aa)). Ni(2+)-binding residues include His137, His139, and Lys220. Lys220 bears the N6-carboxylysine mark. Residue His222 coordinates substrate. His249 and His275 together coordinate Ni(2+). The active-site Proton donor is the His323. Ni(2+) is bound at residue Asp363.

It belongs to the metallo-dependent hydrolases superfamily. Urease alpha subunit family. Heterotrimer of UreA (gamma), UreB (beta) and UreC (alpha) subunits. Three heterotrimers associate to form the active enzyme. Ni cation serves as cofactor. In terms of processing, carboxylation allows a single lysine to coordinate two nickel ions.

Its subcellular location is the cytoplasm. The enzyme catalyses urea + 2 H2O + H(+) = hydrogencarbonate + 2 NH4(+). It participates in nitrogen metabolism; urea degradation; CO(2) and NH(3) from urea (urease route): step 1/1. The protein is Urease subunit alpha of Arthrobacter sp. (strain FB24).